The chain runs to 340 residues: tRNA N6-adenosine threonylcarbamoyltransferase (340 aa).

Positions 111 and 115 each coordinate Fe cation. Substrate-binding positions include 134-138 (LVSGG), D167, G180, and N276. D304 is a Fe cation binding site.

Belongs to the KAE1 / TsaD family. The cofactor is Fe(2+).

Its subcellular location is the cytoplasm. The catalysed reaction is L-threonylcarbamoyladenylate + adenosine(37) in tRNA = N(6)-L-threonylcarbamoyladenosine(37) in tRNA + AMP + H(+). Its function is as follows. Required for the formation of a threonylcarbamoyl group on adenosine at position 37 (t(6)A37) in tRNAs that read codons beginning with adenine. Is involved in the transfer of the threonylcarbamoyl moiety of threonylcarbamoyl-AMP (TC-AMP) to the N6 group of A37, together with TsaE and TsaB. TsaD likely plays a direct catalytic role in this reaction. The chain is tRNA N6-adenosine threonylcarbamoyltransferase from Helicobacter pylori (strain ATCC 700392 / 26695) (Campylobacter pylori).